The following is a 453-amino-acid chain: Bifunctional protein GlmU (453 aa).

Residues 1-225 form a pyrophosphorylase region; it reads MNIVILAAGT…EWETLGVNSK (225 aa). Residues 6–9, K20, Q71, 76–77, 98–100, G135, E150, N165, and N223 contribute to the UDP-N-acetyl-alpha-D-glucosamine site; these read LAAG, GT, and YGD. D100 is a Mg(2+) binding site. N223 contributes to the Mg(2+) binding site. The linker stretch occupies residues 226-246; that stretch reads AQLAELERIHQRNVADALLVD. The segment at 247-453 is N-acetyltransferase; that stretch reads GVTLADPARV…GYVRPVKKKS (207 aa). UDP-N-acetyl-alpha-D-glucosamine is bound by residues R329 and K347. The Proton acceptor role is filled by H359. Y362 and N373 together coordinate UDP-N-acetyl-alpha-D-glucosamine. Residues A376, 382–383, S401, and A419 contribute to the acetyl-CoA site; that span reads NY.

It in the N-terminal section; belongs to the N-acetylglucosamine-1-phosphate uridyltransferase family. This sequence in the C-terminal section; belongs to the transferase hexapeptide repeat family. In terms of assembly, homotrimer. It depends on Mg(2+) as a cofactor.

It localises to the cytoplasm. The catalysed reaction is alpha-D-glucosamine 1-phosphate + acetyl-CoA = N-acetyl-alpha-D-glucosamine 1-phosphate + CoA + H(+). The enzyme catalyses N-acetyl-alpha-D-glucosamine 1-phosphate + UTP + H(+) = UDP-N-acetyl-alpha-D-glucosamine + diphosphate. The protein operates within nucleotide-sugar biosynthesis; UDP-N-acetyl-alpha-D-glucosamine biosynthesis; N-acetyl-alpha-D-glucosamine 1-phosphate from alpha-D-glucosamine 6-phosphate (route II): step 2/2. Its pathway is nucleotide-sugar biosynthesis; UDP-N-acetyl-alpha-D-glucosamine biosynthesis; UDP-N-acetyl-alpha-D-glucosamine from N-acetyl-alpha-D-glucosamine 1-phosphate: step 1/1. It functions in the pathway bacterial outer membrane biogenesis; LPS lipid A biosynthesis. Its function is as follows. Catalyzes the last two sequential reactions in the de novo biosynthetic pathway for UDP-N-acetylglucosamine (UDP-GlcNAc). The C-terminal domain catalyzes the transfer of acetyl group from acetyl coenzyme A to glucosamine-1-phosphate (GlcN-1-P) to produce N-acetylglucosamine-1-phosphate (GlcNAc-1-P), which is converted into UDP-GlcNAc by the transfer of uridine 5-monophosphate (from uridine 5-triphosphate), a reaction catalyzed by the N-terminal domain. This is Bifunctional protein GlmU from Burkholderia orbicola (strain MC0-3).